Here is a 517-residue protein sequence, read N- to C-terminus: ATP synthase subunit alpha (517 aa).

ATP is bound at residue 174-181; that stretch reads GDRQTGKT.

This sequence belongs to the ATPase alpha/beta chains family. F-type ATPases have 2 components, CF(1) - the catalytic core - and CF(0) - the membrane proton channel. CF(1) has five subunits: alpha(3), beta(3), gamma(1), delta(1), epsilon(1). CF(0) has three main subunits: a(1), b(2) and c(9-12). The alpha and beta chains form an alternating ring which encloses part of the gamma chain. CF(1) is attached to CF(0) by a central stalk formed by the gamma and epsilon chains, while a peripheral stalk is formed by the delta and b chains.

Its subcellular location is the cell inner membrane. The catalysed reaction is ATP + H2O + 4 H(+)(in) = ADP + phosphate + 5 H(+)(out). Its function is as follows. Produces ATP from ADP in the presence of a proton gradient across the membrane. The alpha chain is a regulatory subunit. The chain is ATP synthase subunit alpha from Variovorax paradoxus (strain S110).